The chain runs to 403 residues: Serine/threonine transporter SstT (403 aa).

8 consecutive transmembrane segments (helical) span residues 11 to 31, 51 to 71, 81 to 101, 138 to 158, 175 to 195, 213 to 233, 285 to 305, and 319 to 339; these read GNLV…AFIS, AIAP…KEVG, VMYV…SFIF, ALAN…GIPL, AVSY…FGLV, LLGV…PILV, VAIP…VTVL, and FMTA…ASGV.

The protein belongs to the dicarboxylate/amino acid:cation symporter (DAACS) (TC 2.A.23) family.

The protein resides in the cell inner membrane. The enzyme catalyses L-serine(in) + Na(+)(in) = L-serine(out) + Na(+)(out). It catalyses the reaction L-threonine(in) + Na(+)(in) = L-threonine(out) + Na(+)(out). Its function is as follows. Involved in the import of serine and threonine into the cell, with the concomitant import of sodium (symport system). The polypeptide is Serine/threonine transporter SstT (Haemophilus ducreyi (strain 35000HP / ATCC 700724)).